We begin with the raw amino-acid sequence, 161 residues long: Cyclic pyranopterin monophosphate synthase (161 aa).

Substrate-binding positions include 75–77 (LCH) and 113–114 (ME). Residue aspartate 128 is part of the active site.

It belongs to the MoaC family. In terms of assembly, homohexamer; trimer of dimers.

It catalyses the reaction (8S)-3',8-cyclo-7,8-dihydroguanosine 5'-triphosphate = cyclic pyranopterin phosphate + diphosphate. It functions in the pathway cofactor biosynthesis; molybdopterin biosynthesis. Functionally, catalyzes the conversion of (8S)-3',8-cyclo-7,8-dihydroguanosine 5'-triphosphate to cyclic pyranopterin monophosphate (cPMP). The chain is Cyclic pyranopterin monophosphate synthase from Cupriavidus pinatubonensis (strain JMP 134 / LMG 1197) (Cupriavidus necator (strain JMP 134)).